The sequence spans 401 residues: Nuclear hormone receptor family member nhr-65 (401 aa).

Positions 10 to 79 (PERCKVCGDT…AGMSSENFQF (70 aa)) form a DNA-binding region, nuclear receptor. NR C4-type zinc fingers lie at residues 13 to 33 (CKVC…CRAC) and 49 to 67 (CENH…LQRC). An NR LBD domain is found at 132–398 (KAEKLIEFGS…FSHPEFIQDA (267 aa)).

The protein belongs to the nuclear hormone receptor family.

The protein resides in the nucleus. In terms of biological role, orphan nuclear receptor. In Caenorhabditis elegans, this protein is Nuclear hormone receptor family member nhr-65 (nhr-65).